The sequence spans 206 residues: Small ribosomal subunit protein uS4 (206 aa).

Positions 15–46 (MGENIWGRPKSPVNKREYGPGQHGQRRKNKLS) are disordered. Positions 94-157 (RRLDAIVYRA…RQLAIVLEAT (64 aa)) constitute an S4 RNA-binding domain.

This sequence belongs to the universal ribosomal protein uS4 family. As to quaternary structure, part of the 30S ribosomal subunit. Contacts protein S5. The interaction surface between S4 and S5 is involved in control of translational fidelity.

One of the primary rRNA binding proteins, it binds directly to 16S rRNA where it nucleates assembly of the body of the 30S subunit. In terms of biological role, with S5 and S12 plays an important role in translational accuracy. This is Small ribosomal subunit protein uS4 from Cereibacter sphaeroides (strain ATCC 17025 / ATH 2.4.3) (Rhodobacter sphaeroides).